The chain runs to 139 residues: Mitochondrial intermembrane space import and assembly protein 40-A (139 aa).

Disulfide bonds link Cys53-Cys55, Cys64-Cys97, and Cys74-Cys87. In terms of domain architecture, CHCH spans 61-105 (SGPCGEQFKSAFSCFHYSQEEIKGSDCLDQFRGMQECMQKYPDLY). Short sequence motifs (cx9C motif) lie at residues 64–74 (CGEQFKSAFSC) and 87–97 (CLDQFRGMQEC). The segment at 103–139 (DLYPQEDDEEEAEKEKQNKEAEPSVTQSSDTKEESSS) is disordered. Residues 115–124 (EKEKQNKEAE) are compositionally biased toward basic and acidic residues.

Monomer. Can form homooligomers.

It is found in the mitochondrion intermembrane space. Central component of a redox-sensitive mitochondrial intermembrane space import machinery which is required for the biogenesis of respiratory chain complexes. Functions as chaperone and catalyzes the formation of disulfide bonds in substrate proteins, such as COX17 or MICU1. Required for the import and folding of small cysteine-containing proteins (small Tim) in the mitochondrial intermembrane space (IMS). Precursor proteins to be imported into the IMS are translocated in their reduced form into the mitochondria. The polypeptide is Mitochondrial intermembrane space import and assembly protein 40-A (chchd4-a) (Xenopus laevis (African clawed frog)).